We begin with the raw amino-acid sequence, 232 residues long: Alpha N-terminal protein methyltransferase 1 (232 aa).

S-adenosyl-L-methionine-binding positions include glycine 71, arginine 76, 123 to 124 (MQ), and glutamine 139.

The protein belongs to the methyltransferase superfamily. NTM1 family.

Its subcellular location is the cytoplasm. The enzyme catalyses N-terminal L-alanyl-L-prolyl-L-lysyl-[protein] + 3 S-adenosyl-L-methionine = N-terminal N,N,N-trimethyl-L-alanyl-L-prolyl-L-lysyl-[protein] + 3 S-adenosyl-L-homocysteine + 3 H(+). It carries out the reaction N-terminal L-seryl-L-prolyl-L-lysyl-[protein] + 3 S-adenosyl-L-methionine = N-terminal N,N,N-trimethyl-L-seryl-L-prolyl-L-lysyl-[protein] + 3 S-adenosyl-L-homocysteine + 3 H(+). It catalyses the reaction N-terminal L-prolyl-L-prolyl-L-lysyl-[protein] + 2 S-adenosyl-L-methionine = N-terminal N,N-dimethyl-L-prolyl-L-prolyl-L-lysyl-[protein] + 2 S-adenosyl-L-homocysteine + 2 H(+). In terms of biological role, alpha-N-methyltransferase that methylates the N-terminus of target proteins containing the N-terminal motif [Ala/Pro/Ser]-Pro-Lys when the initiator Met is cleaved. Specifically catalyzes mono-, di- or tri-methylation of exposed alpha-amino group of Ala or Ser residue in the [Ala/Ser]-Pro-Lys motif and mono- or di-methylation of Pro in the Pro-Pro-Lys motif. Responsible for the N-terminal methylation of the ribosomal proteins RPL12A, RPL12B, RPS25A and RPS25B. The sequence is that of Alpha N-terminal protein methyltransferase 1 (TAE1) from Saccharomyces cerevisiae (strain ATCC 204508 / S288c) (Baker's yeast).